A 98-amino-acid chain; its full sequence is Integration host factor subunit alpha (98 aa).

A disordered region spans residues 49–72; sequence FGNFDLRDKNQRPGRNPKTGEDIP.

Belongs to the bacterial histone-like protein family. As to quaternary structure, heterodimer of an alpha and a beta chain.

Its function is as follows. This protein is one of the two subunits of integration host factor, a specific DNA-binding protein that functions in genetic recombination as well as in transcriptional and translational control. In Shewanella loihica (strain ATCC BAA-1088 / PV-4), this protein is Integration host factor subunit alpha.